The primary structure comprises 478 residues: Cytochrome c-552 (478 aa).

A signal peptide spans 1 to 26; it reads MTRIKINARRIFSLLIPFFFFTSVHA. His-94 contacts heme c. Residues Cys-122, Cys-125, and Lys-126 each contribute to the heme site. Residues Cys-160, Cys-163, His-164, Cys-209, Cys-212, and His-213 each coordinate heme c. Glu-215, Tyr-216, Lys-261, and Gln-263 together coordinate Ca(2+). Substrate is bound at residue Tyr-216. His-264 provides a ligand contact to substrate. His-275, Cys-282, Cys-285, His-286, His-301, Cys-314, Cys-317, His-318, and His-393 together coordinate heme c.

Belongs to the cytochrome c-552 family. Ca(2+) serves as cofactor. It depends on heme c as a cofactor.

The protein resides in the periplasm. It carries out the reaction 6 Fe(III)-[cytochrome c] + NH4(+) + 2 H2O = 6 Fe(II)-[cytochrome c] + nitrite + 8 H(+). Its pathway is nitrogen metabolism; nitrate reduction (assimilation). Its function is as follows. Catalyzes the reduction of nitrite to ammonia, consuming six electrons in the process. The protein is Cytochrome c-552 of Escherichia coli O9:H4 (strain HS).